Reading from the N-terminus, the 181-residue chain is NADH-quinone oxidoreductase subunit 2 (181 aa).

[2Fe-2S] cluster contacts are provided by cysteine 83, serine 87, cysteine 88, cysteine 124, and cysteine 128. Residues cysteine 144 and cysteine 172 are joined by a disulfide bond.

It belongs to the complex I 24 kDa subunit family. As to quaternary structure, NDH-1 is composed of 15 different subunits, Nqo1 to Nqo15. The complex has a L-shaped structure, with the hydrophobic arm (subunits Nqo7, Nqo8 and Nqo10 to Nqo14) embedded in the membrane and the hydrophilic peripheral arm (subunits Nqo1 to Nqo6, Nqo9 and Nqo15) protruding into the bacterial cytoplasm. The hydrophilic domain contains all the redox centers. [2Fe-2S] cluster serves as cofactor.

The protein resides in the cell membrane. It catalyses the reaction a quinone + NADH + 5 H(+)(in) = a quinol + NAD(+) + 4 H(+)(out). Functionally, NDH-1 shuttles electrons from NADH, via FMN and iron-sulfur (Fe-S) centers, to quinones in the respiratory chain. The immediate electron acceptor for the enzyme in this species is menaquinone. Couples the redox reaction to proton translocation (for every two electrons transferred, four hydrogen ions are translocated across the cytoplasmic membrane), and thus conserves the redox energy in a proton gradient required for the synthesis of ATP. The chain is NADH-quinone oxidoreductase subunit 2 (nqo2) from Thermus thermophilus (strain ATCC 27634 / DSM 579 / HB8).